The following is a 1035-amino-acid chain: Potassium-transporting ATPase alpha chain 1 (1035 aa).

The interval 1 to 41 is disordered; the sequence is MGKADNYELYSVELGPGPGGDMAAKMSKKKKAGGGGGKRKE. The Cytoplasmic segment spans residues 1–98; it reads MGKADNYELY…NALRPPRGTP (98 aa). 2 positions are modified to phosphotyrosine: tyrosine 7 and tyrosine 10. Residues 26 to 40 are compositionally biased toward basic residues; that stretch reads MSKKKKAGGGGGKRK. Position 27 is a phosphoserine (serine 27). The chain crosses the membrane as a helical span at residues 99-119; that stretch reads EYVKFARQLAGGLQCLMWVAA. The Lumenal portion of the chain corresponds to 120-142; sequence AICLIAFAIQASEGDLTTDDNLY. A helical membrane pass occupies residues 143 to 163; the sequence is LALALIAVVVVTGCFGYYQEF. The Cytoplasmic segment spans residues 164 to 299; it reads KSTNIIASFK…NEKTPIAIEI (136 aa). Residues 300 to 319 form a helical membrane-spanning segment; sequence EHFVDIIAGLAILFGATFFV. Residues 320 to 331 lie on the Lumenal side of the membrane; it reads VAMCIGYTFLRA. A helical transmembrane segment spans residues 332–349; it reads MVFFMAIVVAYVPEGLLA. K(+) contacts are provided by valine 340, alanine 341, valine 343, and glutamate 345. Topologically, residues 350-783 are cytoplasmic; the sequence is TVTVCLSLTA…EQGRLIFDNL (434 aa). Aspartate 387 functions as the 4-aspartylphosphate intermediate in the catalytic mechanism. Mg(2+) is bound by residues aspartate 387 and threonine 389. Serine 463 and serine 601 each carry phosphoserine. 2 residues coordinate Mg(2+): aspartate 728 and aspartate 732. A helical membrane pass occupies residues 784–803; the sequence is KKSIAYTLTKNIPELTPYLI. Glutamate 797 contributes to the K(+) binding site. Over 804-813 the chain is Lumenal; sequence YITVSVPLPL. Residues 814–834 traverse the membrane as a helical segment; that stretch reads GCITILFIELCTDIFPSVSLA. Residue glutamate 822 coordinates K(+). Residues 835–854 lie on the Cytoplasmic side of the membrane; the sequence is YEKAESDIMHLRPRNPKRDR. A Phosphoserine modification is found at serine 840. The helical transmembrane segment at 855–877 threads the bilayer; the sequence is LVNEPLAAYSYFQIGAIQSFAGF. Topologically, residues 878-929 are lumenal; sequence TDYFTAMAQEGWFPLLCVGLRPQWEDHHLQDLQDSYGQEWTFGQRLYQQYTC. The chain crosses the membrane as a helical span at residues 930–949; the sequence is YTVFFISIEMCQIADVLIRK. The Cytoplasmic segment spans residues 950–963; that stretch reads TRRLSAFQQGFFRN. The residue at position 954 (serine 954) is a Phosphoserine; by PKA. Residues 964 to 982 form a helical membrane-spanning segment; that stretch reads RILVIAIVFQVCIGCFLCY. Over 983-997 the chain is Lumenal; that stretch reads CPGMPNIFNFMPIRF. Residues 998 to 1018 form a helical membrane-spanning segment; the sequence is QWWLVPMPFGLLIFVYDEIRK. Topologically, residues 1019 to 1035 are cytoplasmic; that stretch reads LGVRCCPGSWWDQELYY.

This sequence belongs to the cation transport ATPase (P-type) (TC 3.A.3) family. Type IIC subfamily. In terms of assembly, the gastric H(+)/K(+) ATPase pump is composed of the catalytic alpha subunit ATP4A and the regulatory beta subunit ATP4B. Interacts (via the P-domain) with ATP4B (via N-terminus); this interaction stabilizes the lumenal-open E2 conformation state and prevents the reverse reaction of the transport cycle.

The protein resides in the apical cell membrane. The protein localises to the cell membrane. The catalysed reaction is K(+)(out) + ATP + H2O + H(+)(in) = K(+)(in) + ADP + phosphate + 2 H(+)(out). The catalytic subunit of the gastric H(+)/K(+) ATPase pump which transports H(+) ions in exchange for K(+) ions across the apical membrane of parietal cells. Uses ATP as an energy source to pump H(+) ions to the gastric lumen while transporting K(+) ion from the lumen into the cell. Remarkably generates a million-fold proton gradient across the gastric parietal cell membrane, acidifying the gastric juice down to pH 1. Within a transport cycle, the transfer of a H(+) ion across the membrane is coupled to ATP hydrolysis and is associated with a transient phosphorylation that shifts the pump conformation from inward-facing (E1) to outward-facing state (E2). The release of the H(+) ion in the stomach lumen is followed by binding of K(+) ion converting the pump conformation back to the E1 state. This is Potassium-transporting ATPase alpha chain 1 (ATP4A) from Oryctolagus cuniculus (Rabbit).